The following is an 873-amino-acid chain: Disks large homolog 1 (873 aa).

An L27 domain is found at 4–64 (RQKDAQRALQ…YYEVSLQDTE (61 aa)). The interval 62–135 (DTEDKPIEDS…SPHIPGDARP (74 aa)) is disordered. A compositionally biased stretch (basic and acidic residues) spans 63–77 (TEDKPIEDSSLKSRE). A compositionally biased stretch (polar residues) spans 85-96 (WNLSVPPSTTGP). PDZ domains follow at residues 230 to 317 (EITL…RRRK) and 325 to 412 (DVKL…AKPT). A compositionally biased stretch (polar residues) spans 441-456 (SYLSQPLTPATPSRYS). The interval 441–464 (SYLSQPLTPATPSRYSPVSKGMLG) is disordered. One can recognise a PDZ 3 domain in the interval 474–555 (KIVLHRGTTG…TVTIIAQYRP (82 aa)). A disordered region spans residues 636-662 (NKDSGEQDTSDVDQHVTSNASDSESSF). The segment covering 650-662 (HVTSNASDSESSF) has biased composition (polar residues). One can recognise a Guanylate kinase-like domain in the interval 683 to 858 (SRPVIILGPM…IYNQVKQIIE (176 aa)).

It belongs to the MAGUK family.

It is found in the cell membrane. It localises to the endoplasmic reticulum membrane. The protein localises to the cell junction. The protein resides in the apical cell membrane. Its function is as follows. Essential multidomain scaffolding protein required for normal development. Recruits channels, receptors and signaling molecules to discrete plasma membrane domains in polarized cells. Promotes epithelial cell layer barrier function via maintaining cell-cell adhesion. May play a role in adherens junction assembly, signal transduction and cell proliferation. May play a role in synapse assembly and function. This is Disks large homolog 1 (dlg1) from Danio rerio (Zebrafish).